A 197-amino-acid chain; its full sequence is MQAGVIAVQGDVAEHAAAVENAAAAHGEPAEVVEVRDAGIVPDCDVLLMPGGESTTISRLIRREGIDEEIREHVASGKPVLATCAGLIVCSRDAKDDRVDALGLVNVSVDRNAFGRQKDSFEAKIPMTGLDEPFHAVFIRAPLIDDVGEGVEVLATVDGRPVAVRDGPVVATAFHPELTDDSRIHDLAFFPEQEVVA.

Position 52–54 (52–54 (GES)) interacts with L-glutamine. Catalysis depends on Cys-84, which acts as the Nucleophile. Residues Arg-111 and 139–140 (IR) contribute to the L-glutamine site. Residues His-175 and Glu-177 each act as charge relay system in the active site.

The protein belongs to the glutaminase PdxT/SNO family. In terms of assembly, in the presence of PdxS, forms a dodecamer of heterodimers. Only shows activity in the heterodimer.

The catalysed reaction is aldehydo-D-ribose 5-phosphate + D-glyceraldehyde 3-phosphate + L-glutamine = pyridoxal 5'-phosphate + L-glutamate + phosphate + 3 H2O + H(+). It catalyses the reaction L-glutamine + H2O = L-glutamate + NH4(+). It functions in the pathway cofactor biosynthesis; pyridoxal 5'-phosphate biosynthesis. Catalyzes the hydrolysis of glutamine to glutamate and ammonia as part of the biosynthesis of pyridoxal 5'-phosphate. The resulting ammonia molecule is channeled to the active site of PdxS. The sequence is that of Pyridoxal 5'-phosphate synthase subunit PdxT from Halorubrum lacusprofundi (strain ATCC 49239 / DSM 5036 / JCM 8891 / ACAM 34).